The sequence spans 104 residues: uncharacterized protein (104 aa).

Helical transmembrane passes span 47-67 and 72-92; these read IDHR…LAML and VGHV…FVLA.

To M.leprae ML1584.

It is found in the cell membrane. This is an uncharacterized protein from Mycobacterium tuberculosis (strain CDC 1551 / Oshkosh).